The chain runs to 160 residues: Phosphopantetheine adenylyltransferase (160 aa).

A substrate-binding site is contributed by Thr10. Residues 10–11 and His18 each bind ATP; that span reads TF. Substrate-binding residues include Lys42, Leu74, and Arg88. Residues 89–91, Glu99, and 124–130 each bind ATP; these read GLR and HGFLSST.

Belongs to the bacterial CoaD family. Homohexamer. It depends on Mg(2+) as a cofactor.

The protein resides in the cytoplasm. The enzyme catalyses (R)-4'-phosphopantetheine + ATP + H(+) = 3'-dephospho-CoA + diphosphate. Its pathway is cofactor biosynthesis; coenzyme A biosynthesis; CoA from (R)-pantothenate: step 4/5. Functionally, reversibly transfers an adenylyl group from ATP to 4'-phosphopantetheine, yielding dephospho-CoA (dPCoA) and pyrophosphate. This is Phosphopantetheine adenylyltransferase from Aliivibrio fischeri (strain MJ11) (Vibrio fischeri).